A 439-amino-acid polypeptide reads, in one-letter code: Serine--tRNA ligase (439 aa).

247–249 (TSE) provides a ligand contact to L-serine. An ATP-binding site is contributed by 278-280 (RSE). Glu301 is an L-serine binding site. 365–368 (EISS) provides a ligand contact to ATP. Position 400 (Ser400) interacts with L-serine.

The protein belongs to the class-II aminoacyl-tRNA synthetase family. Type-1 seryl-tRNA synthetase subfamily. Homodimer. The tRNA molecule binds across the dimer.

It is found in the cytoplasm. It catalyses the reaction tRNA(Ser) + L-serine + ATP = L-seryl-tRNA(Ser) + AMP + diphosphate + H(+). The catalysed reaction is tRNA(Sec) + L-serine + ATP = L-seryl-tRNA(Sec) + AMP + diphosphate + H(+). It participates in aminoacyl-tRNA biosynthesis; selenocysteinyl-tRNA(Sec) biosynthesis; L-seryl-tRNA(Sec) from L-serine and tRNA(Sec): step 1/1. In terms of biological role, catalyzes the attachment of serine to tRNA(Ser). Is also able to aminoacylate tRNA(Sec) with serine, to form the misacylated tRNA L-seryl-tRNA(Sec), which will be further converted into selenocysteinyl-tRNA(Sec). In Paracidovorax citrulli (strain AAC00-1) (Acidovorax citrulli), this protein is Serine--tRNA ligase.